The primary structure comprises 200 residues: ATP-dependent Clp protease proteolytic subunit 2 (200 aa).

Serine 99 functions as the Nucleophile in the catalytic mechanism. Histidine 124 is a catalytic residue.

The protein belongs to the peptidase S14 family. Fourteen ClpP subunits assemble into 2 heptameric rings which stack back to back to give a disk-like structure with a central cavity, resembling the structure of eukaryotic proteasomes.

It localises to the cytoplasm. It catalyses the reaction Hydrolysis of proteins to small peptides in the presence of ATP and magnesium. alpha-casein is the usual test substrate. In the absence of ATP, only oligopeptides shorter than five residues are hydrolyzed (such as succinyl-Leu-Tyr-|-NHMec, and Leu-Tyr-Leu-|-Tyr-Trp, in which cleavage of the -Tyr-|-Leu- and -Tyr-|-Trp bonds also occurs).. Its function is as follows. Cleaves peptides in various proteins in a process that requires ATP hydrolysis. Has a chymotrypsin-like activity. Plays a major role in the degradation of misfolded proteins. This is ATP-dependent Clp protease proteolytic subunit 2 from Treponema denticola (strain ATCC 35405 / DSM 14222 / CIP 103919 / JCM 8153 / KCTC 15104).